Consider the following 161-residue polypeptide: Probable K(+)/H(+) antiporter subunit E (161 aa).

The next 2 helical transmembrane spans lie at 4–21 and 28–50; these read WFPY…WLLL and GSIV…LQPA.

Belongs to the CPA3 antiporters (TC 2.A.63) subunit E family. As to quaternary structure, may form a hetero-oligomeric complex that consists of six subunits: PhaAB, PhaC, PhaD, PhaE, PhaF and PhaG.

It localises to the cell membrane. Functionally, part of a K(+) efflux system which is required for the adaptation of R.meliloti to alkaline pH as well as for the infection process during symbiotic nodule development. In Rhizobium meliloti (strain 1021) (Ensifer meliloti), this protein is Probable K(+)/H(+) antiporter subunit E (phaE).